The primary structure comprises 306 residues: Elongation factor Ts (306 aa).

The involved in Mg(2+) ion dislocation from EF-Tu stretch occupies residues 81 to 84 (TDFV).

This sequence belongs to the EF-Ts family.

It localises to the cytoplasm. Functionally, associates with the EF-Tu.GDP complex and induces the exchange of GDP to GTP. It remains bound to the aminoacyl-tRNA.EF-Tu.GTP complex up to the GTP hydrolysis stage on the ribosome. The sequence is that of Elongation factor Ts from Polaromonas naphthalenivorans (strain CJ2).